Here is a 360-residue protein sequence, read N- to C-terminus: 3-isopropylmalate dehydrogenase (360 aa).

76–89 (GPKWDKIERDIRPE) provides a ligand contact to NAD(+). Substrate contacts are provided by Arg-96, Arg-106, Arg-134, and Asp-224. Residues Asp-224, Asp-248, and Asp-252 each contribute to the Mg(2+) site. NAD(+) is bound at residue 282-294 (GSAPDIAGLGIAN).

It belongs to the isocitrate and isopropylmalate dehydrogenases family. LeuB type 1 subfamily. In terms of assembly, homodimer. The cofactor is Mg(2+). Mn(2+) is required as a cofactor.

The protein resides in the cytoplasm. It catalyses the reaction (2R,3S)-3-isopropylmalate + NAD(+) = 4-methyl-2-oxopentanoate + CO2 + NADH. It participates in amino-acid biosynthesis; L-leucine biosynthesis; L-leucine from 3-methyl-2-oxobutanoate: step 3/4. Catalyzes the oxidation of 3-carboxy-2-hydroxy-4-methylpentanoate (3-isopropylmalate) to 3-carboxy-4-methyl-2-oxopentanoate. The product decarboxylates to 4-methyl-2 oxopentanoate. In Pseudomonas putida (strain ATCC 47054 / DSM 6125 / CFBP 8728 / NCIMB 11950 / KT2440), this protein is 3-isopropylmalate dehydrogenase.